Reading from the N-terminus, the 273-residue chain is Probable ribosomal RNA small subunit methyltransferase A (273 aa).

The S-adenosyl-L-methionine site is built by Asn-23, Leu-25, Gly-50, Glu-71, Asp-95, and Asn-110.

It belongs to the class I-like SAM-binding methyltransferase superfamily. rRNA adenine N(6)-methyltransferase family. RsmA subfamily.

The protein resides in the cytoplasm. Its function is as follows. Specifically dimethylates two adjacent adenosines in the loop of a conserved hairpin near the 3'-end of 16S rRNA in the 30S particle. May play a critical role in biogenesis of 30S subunits. This is Probable ribosomal RNA small subunit methyltransferase A from Thermococcus sibiricus (strain DSM 12597 / MM 739).